The following is a 73-amino-acid chain: UPF0154 protein BcerKBAB4_3367 (73 aa).

The helical transmembrane segment at 4 to 24 (WLGILVGVVALVAGVALGFFI) threads the bilayer.

It belongs to the UPF0154 family.

The protein resides in the cell membrane. This chain is UPF0154 protein BcerKBAB4_3367, found in Bacillus mycoides (strain KBAB4) (Bacillus weihenstephanensis).